The chain runs to 339 residues: Ribosomal RNA small subunit methyltransferase H (339 aa).

Residues 40-42 (GGY), aspartate 58, phenylalanine 85, aspartate 106, and glutamine 113 each bind S-adenosyl-L-methionine.

This sequence belongs to the methyltransferase superfamily. RsmH family.

It localises to the cytoplasm. The enzyme catalyses cytidine(1402) in 16S rRNA + S-adenosyl-L-methionine = N(4)-methylcytidine(1402) in 16S rRNA + S-adenosyl-L-homocysteine + H(+). Functionally, specifically methylates the N4 position of cytidine in position 1402 (C1402) of 16S rRNA. This chain is Ribosomal RNA small subunit methyltransferase H, found in Parvibaculum lavamentivorans (strain DS-1 / DSM 13023 / NCIMB 13966).